The sequence spans 427 residues: Serine--tRNA ligase (427 aa).

Thr-231 to Glu-233 provides a ligand contact to L-serine. Arg-262 to Glu-264 is an ATP binding site. Glu-285 lines the L-serine pocket. Glu-349–Ser-352 provides a ligand contact to ATP. Residue Ser-385 coordinates L-serine.

The protein belongs to the class-II aminoacyl-tRNA synthetase family. Type-1 seryl-tRNA synthetase subfamily. In terms of assembly, homodimer. The tRNA molecule binds across the dimer.

The protein resides in the cytoplasm. The catalysed reaction is tRNA(Ser) + L-serine + ATP = L-seryl-tRNA(Ser) + AMP + diphosphate + H(+). The enzyme catalyses tRNA(Sec) + L-serine + ATP = L-seryl-tRNA(Sec) + AMP + diphosphate + H(+). The protein operates within aminoacyl-tRNA biosynthesis; selenocysteinyl-tRNA(Sec) biosynthesis; L-seryl-tRNA(Sec) from L-serine and tRNA(Sec): step 1/1. Catalyzes the attachment of serine to tRNA(Ser). Is also able to aminoacylate tRNA(Sec) with serine, to form the misacylated tRNA L-seryl-tRNA(Sec), which will be further converted into selenocysteinyl-tRNA(Sec). In Rhizobium etli (strain ATCC 51251 / DSM 11541 / JCM 21823 / NBRC 15573 / CFN 42), this protein is Serine--tRNA ligase.